Reading from the N-terminus, the 681-residue chain is DNA ligase (681 aa).

NAD(+) contacts are provided by residues Asp-45–Asp-49, Ser-94–Leu-95, and Glu-120. The active-site N6-AMP-lysine intermediate is Lys-122. Residues Arg-143, Glu-177, Lys-289, and Lys-313 each contribute to the NAD(+) site. Residues Cys-403, Cys-406, Cys-421, and Cys-426 each contribute to the Zn(2+) site. Residues Ala-593–Ile-681 enclose the BRCT domain.

Belongs to the NAD-dependent DNA ligase family. LigA subfamily. Mg(2+) is required as a cofactor. The cofactor is Mn(2+).

The catalysed reaction is NAD(+) + (deoxyribonucleotide)n-3'-hydroxyl + 5'-phospho-(deoxyribonucleotide)m = (deoxyribonucleotide)n+m + AMP + beta-nicotinamide D-nucleotide.. In terms of biological role, DNA ligase that catalyzes the formation of phosphodiester linkages between 5'-phosphoryl and 3'-hydroxyl groups in double-stranded DNA using NAD as a coenzyme and as the energy source for the reaction. It is essential for DNA replication and repair of damaged DNA. The chain is DNA ligase from Leptospira interrogans serogroup Icterohaemorrhagiae serovar copenhageni (strain Fiocruz L1-130).